A 283-amino-acid polypeptide reads, in one-letter code: MPRAPAIARTLPSLRRALEGLRARRATVALVPTMGALHDGHLALVRQAKRRASKVVVSIFVNPTQFAPHEDFGSYPRTWKADMAKLAEARVDLVWNPDVGTMYPPDFATRILTEGPAMAGLEDRFRPHFFGGVATVVGKLFAQCRPDVALFGQKDYQQFKVVTRMATDLDLGVKIIGVPIVRERDGLAMSSRNAYLSAEQRAVAPTLHRVMKDAAKRLRNGDDLETVMADGAGTIVDAGFALDYFEARHAETLAPVRSIKDGPVRLLVAAKIGTTRLIDNIGV.

34–41 (MGALHDGH) lines the ATP pocket. The active-site Proton donor is histidine 41. Glutamine 65 is a binding site for (R)-pantoate. Glutamine 65 contributes to the beta-alanine binding site. 152-155 (GQKD) serves as a coordination point for ATP. Glutamine 158 lines the (R)-pantoate pocket. Residues valine 181 and 189–192 (MSSR) each bind ATP.

Belongs to the pantothenate synthetase family. Homodimer.

The protein resides in the cytoplasm. The catalysed reaction is (R)-pantoate + beta-alanine + ATP = (R)-pantothenate + AMP + diphosphate + H(+). It functions in the pathway cofactor biosynthesis; (R)-pantothenate biosynthesis; (R)-pantothenate from (R)-pantoate and beta-alanine: step 1/1. Catalyzes the condensation of pantoate with beta-alanine in an ATP-dependent reaction via a pantoyl-adenylate intermediate. This Nitrobacter hamburgensis (strain DSM 10229 / NCIMB 13809 / X14) protein is Pantothenate synthetase.